The chain runs to 783 residues: MAKYNTGGNPTEDVSVNSRPFRVTGPNSSSGIQARKNLFNNQGNASPPAGPSNVPKFGSPKPPVAVKPSSEEKPDKEPKPPFLKPTGAGQRFGTPASLTTRDPEAKVGFLKPVGPKPINLPKEDSKPTFPWPPGNKPSLHSVNQDHDLKPLGPKSGPTPPTSENEQKQAFPKLTGVKGKFMSASQDLEPKPLFPKPAFGQKPPLSTENSHEDESPMKNVSSSKGSPAPLGVRSKSGPLKPAREDSENKDHAGEISSLPFPGVVLKPAASRGGPGLSKNGEEKKEDRKIDAAKNTFQSKINQEELASGTPPARFPKAPSKLTVGGPWGQSQEKEKGDKNSATPKQKPLPPLFTLGPPPPKPNRPPNVDLTKFHKTSSGNSTSKGQTSYSTTSLPPPPPSHPASQPPLPASHPSQPPVPSLPPRNIKPPFDLKSPVNEDNQDGVTHSDGAGNLDEEQDSEGETYEDIEASKEREKKREKEEKKRLELEKKEQKEKEKKEQEIKKKFKLTGPIQVIHLAKACCDVKGGKNELSFKQGEQIEIIRITDNPEGKWLGRTARGSYGYIKTTAVEIDYDSLKLKKDSLGAPSRPIEDDQEVYDDVAEQDDISSHSQSGSGGIFPPPPDDDIYDGIEEEDADDGFPAPPKQLDMGDEVYDDVDTSDFPVSSAEMSQGTNVGKAKTEEKDLKKLKKQEKEEKDFRKKFKYDGEIRVLYSTKVTTSITSKKWGTRDLQVKPGESLEVIQTTDDTKVLCRNEEGKYGYVLRSYLADNDGEIYDDIADGCIYDND.

Composition is skewed to polar residues over residues 1-18 (MAKY…SVNS) and 25-45 (GPNS…QGNA). The disordered stretch occupies residues 1-502 (MAKYNTGGNP…KEKKEQEIKK (502 aa)). Position 3 is an N6-acetyllysine (Lys-3). 2 positions are modified to phosphoserine: Ser-28 and Ser-46. Residues 69 to 79 (SSEEKPDKEPK) are compositionally biased toward basic and acidic residues. Ser-225 carries the phosphoserine modification. Composition is skewed to basic and acidic residues over residues 240 to 252 (PARE…DHAG) and 278 to 290 (NGEE…KIDA). Ser-329 bears the Phosphoserine mark. Residues 345–363 (KPLPPLFTLGPPPPKPNRP) show a composition bias toward pro residues. The interval 348–448 (PPLFTLGPPP…QDGVTHSDGA (101 aa)) is interaction with SKAP1. The segment covering 374–387 (TSSGNSTSKGQTSY) has biased composition (polar residues). Residues 392 to 424 (LPPPPPSHPASQPPLPASHPSQPPVPSLPPRNI) are compositionally biased toward pro residues. Residues 451–465 (LDEEQDSEGETYEDI) are compositionally biased toward acidic residues. The stretch at 456–507 (DSEGETYEDIEASKEREKKREKEEKKRLELEKKEQKEKEKKEQEIKKKFKLT) forms a coiled coil. Ser-457 bears the Phosphoserine mark. The short motif at 462-465 (YEDI) is the SH2-binding element. Residues 466 to 501 (EASKEREKKREKEEKKRLELEKKEQKEKEKKEQEIK) show a composition bias toward basic and acidic residues. Positions 469–505 (KEREKKREKEEKKRLELEKKEQKEKEKKEQEIKKKFK) match the Nuclear localization signal motif. The region spanning 511-572 (QVIHLAKACC…KTTAVEIDYD (62 aa)) is the SH3 1 domain. Tyr-571 is subject to Phosphotyrosine. 2 positions are modified to phosphoserine: Ser-573 and Ser-580. Residues 595–598 (YDDV) carry the SH2-binding; to LCP2 motif. A disordered region spans residues 598-678 (VAEQDDISSH…GTNVGKAKTE (81 aa)). Acidic residues-rich tracts occupy residues 620 to 635 (PDDD…DADD) and 646 to 656 (MGDEVYDDVDT). The SH2-binding; to FYN signature appears at 625–628 (YDGI). At Tyr-651 the chain carries Phosphotyrosine. Positions 674–700 (KAKTEEKDLKKLKKQEKEEKDFRKKFK) match the Nuclear localization signal motif. The SH3 2 domain occupies 700–768 (KYDGEIRVLY…LRSYLADNDG (69 aa)).

In terms of assembly, part of a complex consisting of SKAP2, FYB1 and PTPNS1. Part of a complex consisting of SKAP2, FYB1 and LILRB3. Part of a complex consisting of SKAP1, FYB1 and CLNK. Interacts with CLNK (via its SH2 domain); this interaction allows SKAP1 and FYB1 to recruit FYN to the complex, thus promoting the phosphorylation of CLNK by FYN. Interacts with FYN. Interacts with LCP2. Interacts with SKAP1. Interacts with SKAP2. Interacts with FASLG. Interacts with EVL. Interacts with TMEM47. Interacts with LCK. In terms of processing, T-cell receptor ligation leads to increased tyrosine phosphorylation. Expressed in hematopoietic tissues such as myeloid and T-cells, spleen and thymus. Not expressed in B-cells, nor in non-lymphoid tissues.

Its subcellular location is the cytoplasm. The protein localises to the nucleus. It localises to the cell junction. Functionally, acts as an adapter protein of the FYN and LCP2 signaling cascades in T-cells. May play a role in linking T-cell signaling to remodeling of the actin cytoskeleton. Modulates the expression of IL2. Involved in platelet activation. Prevents the degradation of SKAP1 and SKAP2. May be involved in high affinity immunoglobulin epsilon receptor signaling in mast cells. This is FYN-binding protein 1 from Homo sapiens (Human).